The primary structure comprises 263 residues: L-erythrulose-1-phosphate isomerase (263 aa).

Residue His-106 is the Electrophile of the active site. Residue Glu-178 is the Proton acceptor of the active site.

This sequence belongs to the triosephosphate isomerase family.

It carries out the reaction L-erythrulose 1-phosphate = D-erythrulose 4-phosphate. Its pathway is carbohydrate metabolism; L-threitol degradation. Functionally, catalyzes the isomerization of L-erythrulose-1P to D-erythrulose-4P. Involved in the degradation pathway of L-threitol, that allows M.smegmatis to grow on this compound as the sole carbon source. The chain is L-erythrulose-1-phosphate isomerase from Mycolicibacterium smegmatis (strain ATCC 700084 / mc(2)155) (Mycobacterium smegmatis).